The following is a 156-amino-acid chain: Small ribosomal subunit protein uS7 (156 aa).

The protein belongs to the universal ribosomal protein uS7 family. Part of the 30S ribosomal subunit. Contacts proteins S9 and S11.

Functionally, one of the primary rRNA binding proteins, it binds directly to 16S rRNA where it nucleates assembly of the head domain of the 30S subunit. Is located at the subunit interface close to the decoding center, probably blocks exit of the E-site tRNA. In Picosynechococcus sp. (strain ATCC 27264 / PCC 7002 / PR-6) (Agmenellum quadruplicatum), this protein is Small ribosomal subunit protein uS7.